We begin with the raw amino-acid sequence, 87 residues long: Small ribosomal subunit protein bS18 (87 aa).

A compositionally biased stretch (basic and acidic residues) spans 1 to 20 (MAGKSSGDRRKPIRKGKDGK). Residues 1 to 24 (MAGKSSGDRRKPIRKGKDGKNAAP) form a disordered region.

The protein belongs to the bacterial ribosomal protein bS18 family. Part of the 30S ribosomal subunit. Forms a tight heterodimer with protein bS6.

Functionally, binds as a heterodimer with protein bS6 to the central domain of the 16S rRNA, where it helps stabilize the platform of the 30S subunit. This is Small ribosomal subunit protein bS18 from Leifsonia xyli subsp. xyli (strain CTCB07).